A 104-amino-acid chain; its full sequence is Hydrogen cyanide synthase subunit HcnA (104 aa).

In terms of domain architecture, 2Fe-2S ferredoxin-type spans 16–97 (ADMTIHLNGQ…GMRVETESNR (82 aa)). [2Fe-2S] cluster is bound by residues C60, C65, C68, and C81.

As to quaternary structure, heterotrimer of HcnA, HcnB and HcnC.

The protein resides in the cell membrane. It carries out the reaction glycine + 2 A = hydrogen cyanide + 2 AH2 + CO2. With respect to regulation, oxygen is necessary for cyanogenesis. Activated by succinate, glycine methyl ester, glucose and D,L-methionine in addition to glycine. Phenazine methosulfate, methylene blue, 2,6-dichlorophenolindophenol (DCIP) and ferricyanide can replace oxygen for the reaction. Inhibited by pyrrolnitrin and acriflavine at 1 mM concentration. Functionally, a three-component membrane-bound flavoenzyme that catalyzes the formation of hydrogen cyanide, a secondary metabolite, by transfer of electrons to a cyanide-resistant branch of the aerobic respiratory chain. This chain is Hydrogen cyanide synthase subunit HcnA, found in Pseudomonas aeruginosa (strain ATCC 15692 / DSM 22644 / CIP 104116 / JCM 14847 / LMG 12228 / 1C / PRS 101 / PAO1).